The primary structure comprises 131 residues: Putative pre-16S rRNA nuclease (131 aa).

Belongs to the YqgF nuclease family.

The protein resides in the cytoplasm. In terms of biological role, could be a nuclease involved in processing of the 5'-end of pre-16S rRNA. The chain is Putative pre-16S rRNA nuclease from Bordetella petrii (strain ATCC BAA-461 / DSM 12804 / CCUG 43448).